The primary structure comprises 264 residues: Small ribosomal subunit protein eS1 (264 aa).

Residue Lys34 is modified to N6-acetyllysine; alternate. Lys34 participates in a covalent cross-link: Glycyl lysine isopeptide (Lys-Gly) (interchain with G-Cter in SUMO2); alternate. Lys56 is subject to N6-acetyllysine. Residue Tyr155 is modified to ADP-ribosyltyrosine. The disordered stretch occupies residues 233-264; sequence GEGSSSGKATGDETGAKVERADGYEPPVQESV. Ser236 and Ser237 each carry phosphoserine. Residues 242–255 show a composition bias toward basic and acidic residues; sequence TGDETGAKVERADG. Residue Lys249 is modified to N6-acetyllysine; alternate. Lys249 is covalently cross-linked (Glycyl lysine isopeptide (Lys-Gly) (interchain with G-Cter in SUMO2); alternate). Tyr256 carries the phosphotyrosine modification. Ser263 bears the Phosphoserine mark.

It belongs to the eukaryotic ribosomal protein eS1 family. As to quaternary structure, component of the small ribosomal subunit. Mature ribosomes consist of a small (40S) and a large (60S) subunit. The 40S subunit contains about 33 different proteins and 1 molecule of RNA (18S). The 60S subunit contains about 49 different proteins and 3 molecules of RNA (28S, 5.8S and 5S). Part of the small subunit (SSU) processome, composed of more than 70 proteins and the RNA chaperone small nucleolar RNA (snoRNA) U3. In terms of processing, ADP-ribosylated at Tyr-155 by PARP1 in presence of HPF1.

The protein localises to the cytoplasm. It is found in the nucleus. It localises to the nucleolus. Component of the small ribosomal subunit. The ribosome is a large ribonucleoprotein complex responsible for the synthesis of proteins in the cell. Part of the small subunit (SSU) processome, first precursor of the small eukaryotic ribosomal subunit. During the assembly of the SSU processome in the nucleolus, many ribosome biogenesis factors, an RNA chaperone and ribosomal proteins associate with the nascent pre-rRNA and work in concert to generate RNA folding, modifications, rearrangements and cleavage as well as targeted degradation of pre-ribosomal RNA by the RNA exosome. May play a role during erythropoiesis. This Callithrix jacchus (White-tufted-ear marmoset) protein is Small ribosomal subunit protein eS1.